A 113-amino-acid polypeptide reads, in one-letter code: Large ribosomal subunit protein bL17 (113 aa).

This sequence belongs to the bacterial ribosomal protein bL17 family. In terms of assembly, part of the 50S ribosomal subunit. Contacts protein L32.

The protein is Large ribosomal subunit protein bL17 of Clostridium tetani (strain Massachusetts / E88).